A 359-amino-acid chain; its full sequence is uncharacterized protein (359 aa).

This is an uncharacterized protein from Treponema pallidum (strain Nichols).